Consider the following 228-residue polypeptide: Cytidylate kinase (228 aa).

17–25 (GPTASGKGT) is a binding site for ATP.

It belongs to the cytidylate kinase family. Type 1 subfamily.

Its subcellular location is the cytoplasm. It catalyses the reaction CMP + ATP = CDP + ADP. The catalysed reaction is dCMP + ATP = dCDP + ADP. This chain is Cytidylate kinase, found in Burkholderia cenocepacia (strain HI2424).